The chain runs to 253 residues: Troponin T, fast skeletal muscle isoforms (253 aa).

Acidic residues predominate over residues 1 to 25; sequence MSDTEEVEHGEEEYEEEEEVQEEEV. Disordered regions lie at residues 1 to 58 and 97 to 178; these read MSDT…DIQK and RAER…VLAE. Residue Ser-2 is modified to N-acetylserine. 3 stretches are compositionally biased toward basic and acidic residues: residues 46–58, 97–139, and 167–178; these read PEGE…DIQK, RAER…DDLK, and TARETKKKVLAE.

Belongs to the troponin T family.

Its function is as follows. Troponin T is the tropomyosin-binding subunit of troponin, the thin filament regulatory complex which confers calcium-sensitivity to striated muscle actomyosin ATPase activity. The chain is Troponin T, fast skeletal muscle isoforms (TNNT3) from Coturnix japonica (Japanese quail).